Reading from the N-terminus, the 350-residue chain is Nicotinate-nucleotide--dimethylbenzimidazole phosphoribosyltransferase (350 aa).

The Proton acceptor role is filled by glutamate 317.

The protein belongs to the CobT family.

The catalysed reaction is 5,6-dimethylbenzimidazole + nicotinate beta-D-ribonucleotide = alpha-ribazole 5'-phosphate + nicotinate + H(+). It participates in nucleoside biosynthesis; alpha-ribazole biosynthesis; alpha-ribazole from 5,6-dimethylbenzimidazole: step 1/2. Catalyzes the synthesis of alpha-ribazole-5'-phosphate from nicotinate mononucleotide (NAMN) and 5,6-dimethylbenzimidazole (DMB). The sequence is that of Nicotinate-nucleotide--dimethylbenzimidazole phosphoribosyltransferase from Shewanella sp. (strain W3-18-1).